An 87-amino-acid polypeptide reads, in one-letter code: Large ribosomal subunit protein bL27 (87 aa).

The disordered stretch occupies residues 1-21; it reads MAHKKAGGSSRNGRDSESKRL.

The protein belongs to the bacterial ribosomal protein bL27 family.

This Burkholderia multivorans (strain ATCC 17616 / 249) protein is Large ribosomal subunit protein bL27.